Here is a 163-residue protein sequence, read N- to C-terminus: uncharacterized protein (163 aa).

2 consecutive transmembrane segments (helical) span residues 7–27 (YLNE…CYIV) and 51–71 (LVIF…LVWF).

It localises to the cell membrane. This is an uncharacterized protein from Rickettsia prowazekii (strain Madrid E).